A 633-amino-acid polypeptide reads, in one-letter code: Threonine--tRNA ligase (633 aa).

The TGS domain maps to 1 to 61 (MINIYFNNNL…TENCTFEVIT (61 aa)). The segment at 242-533 (DHRKIGKELE…LIEHHSGKFP (292 aa)) is catalytic. Residues Cys-333, His-384, and His-510 each coordinate Zn(2+).

This sequence belongs to the class-II aminoacyl-tRNA synthetase family. In terms of assembly, homodimer. Zn(2+) is required as a cofactor.

The protein localises to the cytoplasm. The catalysed reaction is tRNA(Thr) + L-threonine + ATP = L-threonyl-tRNA(Thr) + AMP + diphosphate + H(+). Its function is as follows. Catalyzes the attachment of threonine to tRNA(Thr) in a two-step reaction: L-threonine is first activated by ATP to form Thr-AMP and then transferred to the acceptor end of tRNA(Thr). Also edits incorrectly charged L-seryl-tRNA(Thr). This Ehrlichia canis (strain Jake) protein is Threonine--tRNA ligase.